A 325-amino-acid chain; its full sequence is Beta-1,3-galactosyltransferase 6 (325 aa).

The Cytoplasmic portion of the chain corresponds to 1–11 (MKVFRRAWRHR). A helical; Signal-anchor for type II membrane protein transmembrane segment spans residues 12–30 (VALGLGGLAFCGTTLLYLA). At 31–325 (RCASEGETPS…QCCQRKEGVP (295 aa)) the chain is on the lumenal side. Residue Asn-127 is glycosylated (N-linked (GlcNAc...) asparagine).

This sequence belongs to the glycosyltransferase 31 family. Mn(2+) is required as a cofactor.

It is found in the golgi apparatus. The protein resides in the golgi stack membrane. It catalyses the reaction 3-O-(beta-D-galactosyl-(1-&gt;4)-beta-D-xylosyl)-L-seryl-[protein] + UDP-alpha-D-galactose = 3-O-(beta-D-galactosyl-(1-&gt;3)-beta-D-galactosyl-(1-&gt;4)-beta-D-xylosyl)-L-seryl-[protein] + UDP + H(+). Its pathway is glycan metabolism; chondroitin sulfate biosynthesis. It functions in the pathway glycan metabolism; heparan sulfate biosynthesis. In terms of biological role, beta-1,3-galactosyltransferase that transfers galactose from UDP-galactose to substrates with a terminal beta-linked galactose residue. Has a preference for galactose-beta-1,4-xylose that is found in the linker region of glycosaminoglycans, such as heparan sulfate and chondroitin sulfate. Has no activity towards substrates with terminal glucosamine or galactosamine residues. The polypeptide is Beta-1,3-galactosyltransferase 6 (B3galt6) (Mus musculus (Mouse)).